Reading from the N-terminus, the 424-residue chain is S-inosyl-L-homocysteine hydrolase (424 aa).

Substrate contacts are provided by Asp130 and Glu155. NAD(+) is bound at residue 156-158 (TTT). Substrate contacts are provided by Lys185 and Asp189. Residues Asn190, 219–224 (GYGWCG), Glu242, Asn277, 298–300 (AGH), and Asn346 each bind NAD(+).

This sequence belongs to the adenosylhomocysteinase family. NAD(+) is required as a cofactor.

It localises to the cytoplasm. The enzyme catalyses S-inosyl-L-homocysteine + H2O = L-homocysteine + inosine. Its pathway is amino-acid biosynthesis; S-adenosyl-L-methionine biosynthesis. Functionally, catalyzes the hydrolysis of S-inosyl-L-homocysteine (SIH) to L-homocysteine (Hcy) and inosine. Likely functions in a S-adenosyl-L-methionine (SAM) recycling pathway from S-adenosyl-L-homocysteine (SAH) produced from SAM-dependent methylation reactions. Can also catalyze the reverse reaction in vitro, i.e. the synthesis of SIH from Hcy and inosine. This is S-inosyl-L-homocysteine hydrolase from Methanopyrus kandleri (strain AV19 / DSM 6324 / JCM 9639 / NBRC 100938).